The sequence spans 671 residues: MSDNDALRALTAQMAQEGIRRLLVLSGDVSWCRERALALREALAGDWLWVATDAPAAPHCTPQALQTLLGREFRHAVFDAQLGFDASAFAALSGTLRAGSWLVLLTPPYSAWESRPDADSLRWSDCPQPVATPHFIQHLKRVMARDEQTLHWQQSQPFSWPRFPARPHWQPATGEPQPEQAAILRHLLRMPPGVAAVTAARGRGKSALAGQLISRMSGTAIVTAPSKAATDVLAQFAGEKFRFLAPDALLAGTETADWLIVDEAAAIPAPLLHRLASRFSRILLTTTVQGYEGTGRGFLLKFCARFPHLRRFELRQPVRWAQGCPLEQWVGEALIFDDETFAHAPQGAIRFSAFTQALWHTGPAQPLAVYQLLSGAHYRTSPLDLRRMMDAPGQHFLGAFTAERVAGAAWLVEEGRLSAALSQAVWAGYRRPRGNLVAQSLAAHGGDPLAATLTGRRVSRIAVHPARQREGIGQQLIAEAYGGASRCDYLSVSFGYTAELWRFWQRCGFVLVRMGNHKEASSGCYTAMALLPISEAGARLAHREHQRLRRDAEILARWNGEAIPVIPLKASTLNDDDWDELAGFAFAHRPLLTSLGSLSRLLERCELALPALRGRLEEKCSDANLCIRLGLPGRKALLVAQRREVAHALTALDDERAQRLRERVLQWQFFH.

ATP is bound by residues Gln-180, 202 to 211 (GRGKSALAGQ), and Arg-319. Positions 349-531 (IRFSAFTQAL…SGCYTAMALL (183 aa)) constitute an N-acetyltransferase domain. Acetyl-CoA is bound by residues 461–463 (IAV), 468–474 (QREGIGQ), Glu-499, and Arg-506.

The protein belongs to the RNA cytidine acetyltransferase family. TmcA subfamily.

Its subcellular location is the cytoplasm. It catalyses the reaction cytidine(34) in elongator tRNA(Met) + acetyl-CoA + ATP + H2O = N(4)-acetylcytidine(34) in elongator tRNA(Met) + ADP + phosphate + CoA + H(+). Functionally, catalyzes the formation of N(4)-acetylcytidine (ac(4)C) at the wobble position of tRNA(Met), by using acetyl-CoA as an acetyl donor and ATP (or GTP). This Citrobacter koseri (strain ATCC BAA-895 / CDC 4225-83 / SGSC4696) protein is tRNA(Met) cytidine acetyltransferase TmcA.